The chain runs to 374 residues: Glyceraldehyde-3-phosphate dehydrogenase A, chloroplastic (374 aa).

The N-terminal 34 residues, 1 to 34 (MAAMMQKSAFTGSAVSSKSGVRAKAARAVVDVRA), are a transit peptide targeting the chloroplast. Residues 47–48 (RI), Asp-71, and Arg-116 each bind NADP(+). A disulfide bridge links Cys-55 with Cys-325. D-glyceraldehyde 3-phosphate-binding positions include 189–191 (SCT), Thr-220, Arg-235, 248–249 (TG), and Arg-271. The active-site Nucleophile is Cys-190. NADP(+) is bound at residue Asn-353.

It belongs to the glyceraldehyde-3-phosphate dehydrogenase family. In terms of assembly, homotetramer. Component of a complex that contains two dimers of PRK, two tetramers of GAPDH and CP12. CP12 associates with GAPDH, causing its conformation to change. This GAPDH/CP12 complex binds PRK to form a half-complex (one unit). This unit probably dimerizes due partially to interactions between the enzymes of each unit.

The protein localises to the plastid. It is found in the chloroplast. The catalysed reaction is D-glyceraldehyde 3-phosphate + phosphate + NADP(+) = (2R)-3-phospho-glyceroyl phosphate + NADPH + H(+). It participates in carbohydrate biosynthesis; Calvin cycle. This chain is Glyceraldehyde-3-phosphate dehydrogenase A, chloroplastic (GAPA), found in Chlamydomonas reinhardtii (Chlamydomonas smithii).